A 571-amino-acid chain; its full sequence is Probable serine/threonine-protein kinase WNK4 (571 aa).

Positions 19 to 277 constitute a Protein kinase domain; it reads GRFAEILGRG…AKELLQDPFL (259 aa). ATP is bound by residues 99–102 and K149; that span reads TELF. Residue D166 is the Proton acceptor of the active site. The disordered stretch occupies residues 396–425; the sequence is EDDETPHDHHRHRTDSFHSSSSHASSSQAS. The segment covering 412–425 has biased composition (low complexity); that stretch reads FHSSSSHASSSQAS. A Phosphoserine modification is found at S522.

Belongs to the protein kinase superfamily. Ser/Thr protein kinase family. WNK subfamily.

The catalysed reaction is L-seryl-[protein] + ATP = O-phospho-L-seryl-[protein] + ADP + H(+). The enzyme catalyses L-threonyl-[protein] + ATP = O-phospho-L-threonyl-[protein] + ADP + H(+). Its function is as follows. May regulate flowering time by modulating the photoperiod pathway. The protein is Probable serine/threonine-protein kinase WNK4 (WNK4) of Arabidopsis thaliana (Mouse-ear cress).